Here is a 139-residue protein sequence, read N- to C-terminus: Endoribonuclease YbeY (139 aa).

3 residues coordinate Zn(2+): His-107, His-111, and Asp-117.

It belongs to the endoribonuclease YbeY family. It depends on Zn(2+) as a cofactor.

It is found in the cytoplasm. In terms of biological role, single strand-specific metallo-endoribonuclease involved in late-stage 70S ribosome quality control and in maturation of the 3' terminus of the 16S rRNA. The polypeptide is Endoribonuclease YbeY (Azobacteroides pseudotrichonymphae genomovar. CFP2).